The following is a 564-amino-acid chain: Adenine deaminase (564 aa).

Belongs to the metallo-dependent hydrolases superfamily. Adenine deaminase family. Mn(2+) is required as a cofactor.

The catalysed reaction is adenine + H2O + H(+) = hypoxanthine + NH4(+). In Deinococcus geothermalis (strain DSM 11300 / CIP 105573 / AG-3a), this protein is Adenine deaminase.